Reading from the N-terminus, the 481-residue chain is UDP-glycosyltransferase 71K2 (481 aa).

Residues Ser-285, 350–351 (WA), 368–376 (HCGWNSILE), and 390–393 (YAEQ) each bind UDP-alpha-D-glucose.

Belongs to the UDP-glycosyltransferase family.

Functionally, glycosyltransferase that possesses chalcone and flavonol 2'-O-glycosyltransferase activity. Converts phloretin to phlorizin (phloretin 2'-O-glucoside), a potent antioxidant. Possesses glycosyltransferase activity toward quercetin, isoliquiritigenin, butein and caffeic acid. The polypeptide is UDP-glycosyltransferase 71K2 (Pyrus communis (Pear)).